We begin with the raw amino-acid sequence, 403 residues long: MDGSKFDDAQTGEQKIRNFNINFGPQHPAAHGVLRLVLELDGEIVERCDPHIGLLHRGTEKLMESRTYLQNLPYFDRLDYVAPMNQEHAWCLAIEKLTGVEVPRRAQLIRVLYSEIGRILNHLLNITTQAMDVGALTPPLWGFEEREKLMIFYERACGARLHAAYFRPGGVHQDLPDELLDDIDLWAMEFPKVMDDIDGLLTENRIFKQRNCDIGVVTEDDIQKYGFSGVMVRGSGLAWDLRRAQPYECYDEFDFQIPVGKNGDCYDRYLVRMEEMRQSLSIIRQAIAKLREATGDVLARGKLTPPKRGDMKTSMESLIHHFKLYTEGFHVPEGEVYAAVEAPKGEFGVYLVADGSNKPYRAKLRAPGFLHLQAMDYVAKGHQLADVAAIIGTMDIVFGEIDR.

This sequence belongs to the complex I 49 kDa subunit family. NDH-1 is composed of 14 different subunits. Subunits NuoB, C, D, E, F, and G constitute the peripheral sector of the complex.

It localises to the cell inner membrane. The enzyme catalyses a quinone + NADH + 5 H(+)(in) = a quinol + NAD(+) + 4 H(+)(out). Its function is as follows. NDH-1 shuttles electrons from NADH, via FMN and iron-sulfur (Fe-S) centers, to quinones in the respiratory chain. The immediate electron acceptor for the enzyme in this species is believed to be ubiquinone. Couples the redox reaction to proton translocation (for every two electrons transferred, four hydrogen ions are translocated across the cytoplasmic membrane), and thus conserves the redox energy in a proton gradient. In Ruegeria sp. (strain TM1040) (Silicibacter sp.), this protein is NADH-quinone oxidoreductase subunit D.